A 275-amino-acid polypeptide reads, in one-letter code: tRNA pseudouridine synthase A (275 aa).

Asp60 functions as the Nucleophile in the catalytic mechanism. Tyr119 is a substrate binding site.

It belongs to the tRNA pseudouridine synthase TruA family. In terms of assembly, homodimer.

The catalysed reaction is uridine(38/39/40) in tRNA = pseudouridine(38/39/40) in tRNA. Formation of pseudouridine at positions 38, 39 and 40 in the anticodon stem and loop of transfer RNAs. The sequence is that of tRNA pseudouridine synthase A from Synechocystis sp. (strain ATCC 27184 / PCC 6803 / Kazusa).